Consider the following 113-residue polypeptide: Nucleoid-associated protein Synpcc7942_0464 (113 aa).

It belongs to the YbaB/EbfC family. Homodimer.

The protein resides in the cytoplasm. Its subcellular location is the nucleoid. In terms of biological role, binds to DNA and alters its conformation. May be involved in regulation of gene expression, nucleoid organization and DNA protection. The polypeptide is Nucleoid-associated protein Synpcc7942_0464 (Synechococcus elongatus (strain ATCC 33912 / PCC 7942 / FACHB-805) (Anacystis nidulans R2)).